We begin with the raw amino-acid sequence, 201 residues long: Large ribosomal subunit protein uL4 (201 aa).

The tract at residues Ala45–Arg67 is disordered.

The protein belongs to the universal ribosomal protein uL4 family. As to quaternary structure, part of the 50S ribosomal subunit.

In terms of biological role, one of the primary rRNA binding proteins, this protein initially binds near the 5'-end of the 23S rRNA. It is important during the early stages of 50S assembly. It makes multiple contacts with different domains of the 23S rRNA in the assembled 50S subunit and ribosome. Forms part of the polypeptide exit tunnel. In Yersinia enterocolitica serotype O:8 / biotype 1B (strain NCTC 13174 / 8081), this protein is Large ribosomal subunit protein uL4.